We begin with the raw amino-acid sequence, 347 residues long: UDP-N-acetylenolpyruvoylglucosamine reductase (347 aa).

Positions 16-187 constitute an FAD-binding PCMH-type domain; sequence AIEQCSHYLV…IAVGLKLPKT (172 aa). Arg-163 is a catalytic residue. Residue Ser-233 is the Proton donor of the active site. Residue Glu-328 is part of the active site.

It belongs to the MurB family. Requires FAD as cofactor.

The protein localises to the cytoplasm. The catalysed reaction is UDP-N-acetyl-alpha-D-muramate + NADP(+) = UDP-N-acetyl-3-O-(1-carboxyvinyl)-alpha-D-glucosamine + NADPH + H(+). It functions in the pathway cell wall biogenesis; peptidoglycan biosynthesis. In terms of biological role, cell wall formation. The polypeptide is UDP-N-acetylenolpyruvoylglucosamine reductase (Vibrio vulnificus (strain CMCP6)).